The primary structure comprises 458 residues: Ribosomal protein uS12 methylthiotransferase RimO (458 aa).

The 112-residue stretch at 8–119 folds into the MTTase N-terminal domain; that stretch reads PTVAFAHLGC…IVDVLQRVEV (112 aa). Residues Cys17, Cys53, Cys82, Cys157, Cys161, and Cys164 each contribute to the [4Fe-4S] cluster site. Positions 143-372 constitute a Radical SAM core domain; that stretch reads TTDQAVAFLK…MALQQPISAE (230 aa). One can recognise a TRAM domain in the interval 375 to 446; the sequence is SRWVGRTVDV…IYDLNGQMVG (72 aa).

It belongs to the methylthiotransferase family. RimO subfamily. Requires [4Fe-4S] cluster as cofactor.

It is found in the cytoplasm. The enzyme catalyses L-aspartate(89)-[ribosomal protein uS12]-hydrogen + (sulfur carrier)-SH + AH2 + 2 S-adenosyl-L-methionine = 3-methylsulfanyl-L-aspartate(89)-[ribosomal protein uS12]-hydrogen + (sulfur carrier)-H + 5'-deoxyadenosine + L-methionine + A + S-adenosyl-L-homocysteine + 2 H(+). Functionally, catalyzes the methylthiolation of an aspartic acid residue of ribosomal protein uS12. The polypeptide is Ribosomal protein uS12 methylthiotransferase RimO (Synechococcus sp. (strain CC9605)).